The following is an 875-amino-acid chain: Alanine--tRNA ligase (875 aa).

Zn(2+) is bound by residues H596, H600, C700, and H704.

The protein belongs to the class-II aminoacyl-tRNA synthetase family. The cofactor is Zn(2+).

Its subcellular location is the cytoplasm. It catalyses the reaction tRNA(Ala) + L-alanine + ATP = L-alanyl-tRNA(Ala) + AMP + diphosphate. Its function is as follows. Catalyzes the attachment of alanine to tRNA(Ala) in a two-step reaction: alanine is first activated by ATP to form Ala-AMP and then transferred to the acceptor end of tRNA(Ala). Also edits incorrectly charged Ser-tRNA(Ala) and Gly-tRNA(Ala) via its editing domain. The sequence is that of Alanine--tRNA ligase from Methanocella arvoryzae (strain DSM 22066 / NBRC 105507 / MRE50).